We begin with the raw amino-acid sequence, 210 residues long: HTH-type transcriptional repressor FabR (210 aa).

In terms of domain architecture, HTH tetR-type spans 10-70 (KTRRSLVEAA…TMVDESGLML (61 aa)). The H-T-H motif DNA-binding region spans 33 to 52 (SLREVAREAGIAPTSFYRHF).

In terms of assembly, homodimer.

The protein localises to the cytoplasm. Functionally, represses the transcription of fabB, involved in unsaturated fatty acid (UFA) biosynthesis. By controlling UFA production, FabR directly influences the physical properties of the membrane bilayer. The protein is HTH-type transcriptional repressor FabR of Salmonella arizonae (strain ATCC BAA-731 / CDC346-86 / RSK2980).